The primary structure comprises 230 residues: Uracil-DNA glycosylase (230 aa).

Residue D71 is the Proton acceptor of the active site.

Belongs to the uracil-DNA glycosylase (UDG) superfamily. UNG family.

The protein resides in the cytoplasm. It carries out the reaction Hydrolyzes single-stranded DNA or mismatched double-stranded DNA and polynucleotides, releasing free uracil.. Its function is as follows. Excises uracil residues from the DNA which can arise as a result of misincorporation of dUMP residues by DNA polymerase or due to deamination of cytosine. This Tropheryma whipplei (strain TW08/27) (Whipple's bacillus) protein is Uracil-DNA glycosylase.